Consider the following 196-residue polypeptide: Probable GTP-binding protein EngB (196 aa).

Positions 21 to 195 (DVSEICLIGR…YELIDKLLGS (175 aa)) constitute an EngB-type G domain. Residues 29–36 (GRSNVGKS), 56–60 (GKTRL), 75–78 (DAPG), 142–145 (TKLD), and 174–176 (ISN) each bind GTP. Positions 36 and 58 each coordinate Mg(2+).

The protein belongs to the TRAFAC class TrmE-Era-EngA-EngB-Septin-like GTPase superfamily. EngB GTPase family. Requires Mg(2+) as cofactor.

In terms of biological role, necessary for normal cell division and for the maintenance of normal septation. The sequence is that of Probable GTP-binding protein EngB from Mycoplasma mycoides subsp. mycoides SC (strain CCUG 32753 / NCTC 10114 / PG1).